The primary structure comprises 164 residues: N5-carboxyaminoimidazole ribonucleotide mutase (164 aa).

Residues S13, D16, and R43 each coordinate substrate.

Belongs to the AIR carboxylase family. Class I subfamily.

It catalyses the reaction 5-carboxyamino-1-(5-phospho-D-ribosyl)imidazole + H(+) = 5-amino-1-(5-phospho-D-ribosyl)imidazole-4-carboxylate. Its pathway is purine metabolism; IMP biosynthesis via de novo pathway; 5-amino-1-(5-phospho-D-ribosyl)imidazole-4-carboxylate from 5-amino-1-(5-phospho-D-ribosyl)imidazole (N5-CAIR route): step 2/2. Functionally, catalyzes the conversion of N5-carboxyaminoimidazole ribonucleotide (N5-CAIR) to 4-carboxy-5-aminoimidazole ribonucleotide (CAIR). The sequence is that of N5-carboxyaminoimidazole ribonucleotide mutase from Haemophilus influenzae (strain ATCC 51907 / DSM 11121 / KW20 / Rd).